The sequence spans 263 residues: Endonuclease 8 (263 aa).

The Schiff-base intermediate with DNA role is filled by proline 2. The active-site Proton donor is the glutamate 3. Lysine 53 acts as the Proton donor; for beta-elimination activity in catalysis. DNA-binding residues include glutamine 70, arginine 125, and asparagine 169. The FPG-type zinc-finger motif lies at 229-263 (KVFHREGKACERCGGVIERSTLSSRPFYGCPVCQK). Catalysis depends on arginine 253, which acts as the Proton donor; for delta-elimination activity.

This sequence belongs to the FPG family. The cofactor is Zn(2+).

It carries out the reaction 2'-deoxyribonucleotide-(2'-deoxyribose 5'-phosphate)-2'-deoxyribonucleotide-DNA = a 3'-end 2'-deoxyribonucleotide-(2,3-dehydro-2,3-deoxyribose 5'-phosphate)-DNA + a 5'-end 5'-phospho-2'-deoxyribonucleoside-DNA + H(+). Its function is as follows. Involved in base excision repair of DNA damaged by oxidation or by mutagenic agents. Acts as a DNA glycosylase that recognizes and removes damaged bases. Has a preference for oxidized pyrimidines, such as thymine glycol, 5,6-dihydrouracil and 5,6-dihydrothymine. Has AP (apurinic/apyrimidinic) lyase activity and introduces nicks in the DNA strand. Cleaves the DNA backbone by beta-delta elimination to generate a single-strand break at the site of the removed base with both 3'- and 5'-phosphates. This chain is Endonuclease 8, found in Enterobacter sp. (strain 638).